A 233-amino-acid polypeptide reads, in one-letter code: Pirin-like protein YhaK (233 aa).

Belongs to the pirin family. As to quaternary structure, monomer.

The protein localises to the cytoplasm. Functionally, does not have quercetin 2,3-dioxygenase activity. The protein is Pirin-like protein YhaK (yhaK) of Escherichia coli O157:H7.